Here is a 325-residue protein sequence, read N- to C-terminus: Foldase protein PrsA (325 aa).

A signal peptide spans 1 to 20 (MKLMNKIIVPVTASALLLGA). Cys21 is lipidated: N-palmitoyl cysteine. The S-diacylglycerol cysteine moiety is linked to residue Cys21. The PpiC domain maps to 139-245 (ENSKKASHIL…YGYHIIKADK (107 aa)). Disordered stretches follow at residues 159–202 (EGLS…KKDG) and 303–325 (PDKI…NSGS).

Belongs to the PrsA family.

It localises to the cell membrane. The enzyme catalyses [protein]-peptidylproline (omega=180) = [protein]-peptidylproline (omega=0). Its function is as follows. Plays a major role in protein secretion by helping the post-translocational extracellular folding of several secreted proteins. The protein is Foldase protein PrsA of Staphylococcus epidermidis (strain ATCC 12228 / FDA PCI 1200).